The following is a 511-amino-acid chain: Bifunctional purine biosynthesis protein PurH (511 aa).

The MGS-like domain occupies M1–S146.

This sequence belongs to the PurH family.

The enzyme catalyses (6R)-10-formyltetrahydrofolate + 5-amino-1-(5-phospho-beta-D-ribosyl)imidazole-4-carboxamide = 5-formamido-1-(5-phospho-D-ribosyl)imidazole-4-carboxamide + (6S)-5,6,7,8-tetrahydrofolate. It carries out the reaction IMP + H2O = 5-formamido-1-(5-phospho-D-ribosyl)imidazole-4-carboxamide. Its pathway is purine metabolism; IMP biosynthesis via de novo pathway; 5-formamido-1-(5-phospho-D-ribosyl)imidazole-4-carboxamide from 5-amino-1-(5-phospho-D-ribosyl)imidazole-4-carboxamide (10-formyl THF route): step 1/1. The protein operates within purine metabolism; IMP biosynthesis via de novo pathway; IMP from 5-formamido-1-(5-phospho-D-ribosyl)imidazole-4-carboxamide: step 1/1. This chain is Bifunctional purine biosynthesis protein PurH, found in Microcystis aeruginosa (strain NIES-843 / IAM M-2473).